The primary structure comprises 82 residues: UPF0180 protein BT9727_1277 (82 aa).

It belongs to the UPF0180 family.

This Bacillus thuringiensis subsp. konkukian (strain 97-27) protein is UPF0180 protein BT9727_1277.